The primary structure comprises 233 residues: Glucosamine-6-phosphate deaminase (233 aa).

Asp-62 functions as the Proton acceptor; for enolization step in the catalytic mechanism. Asn-128 (for ring-opening step) is an active-site residue. His-130 serves as the catalytic Proton acceptor; for ring-opening step. Glu-135 (for ring-opening step) is an active-site residue.

This sequence belongs to the glucosamine/galactosamine-6-phosphate isomerase family. NagB subfamily.

The enzyme catalyses alpha-D-glucosamine 6-phosphate + H2O = beta-D-fructose 6-phosphate + NH4(+). Its pathway is amino-sugar metabolism; N-acetylneuraminate degradation; D-fructose 6-phosphate from N-acetylneuraminate: step 5/5. In terms of biological role, catalyzes the reversible isomerization-deamination of glucosamine 6-phosphate (GlcN6P) to form fructose 6-phosphate (Fru6P) and ammonium ion. The chain is Glucosamine-6-phosphate deaminase from Streptococcus thermophilus (strain ATCC BAA-491 / LMD-9).